The following is a 263-amino-acid chain: tRNA1(Val) (adenine(37)-N6)-methyltransferase (263 aa).

Belongs to the methyltransferase superfamily. tRNA (adenine-N(6)-)-methyltransferase family.

It is found in the cytoplasm. It carries out the reaction adenosine(37) in tRNA1(Val) + S-adenosyl-L-methionine = N(6)-methyladenosine(37) in tRNA1(Val) + S-adenosyl-L-homocysteine + H(+). Its function is as follows. Specifically methylates the adenine in position 37 of tRNA(1)(Val) (anticodon cmo5UAC). In Pseudoalteromonas atlantica (strain T6c / ATCC BAA-1087), this protein is tRNA1(Val) (adenine(37)-N6)-methyltransferase.